We begin with the raw amino-acid sequence, 315 residues long: Ribosomal RNA small subunit methyltransferase H (315 aa).

Residues 33 to 35 (GGH), Asp-52, Phe-84, Asp-106, and Gln-113 contribute to the S-adenosyl-L-methionine site. Residues 295–315 (SDELEENNRSHSAKLRVAEKL) form a disordered region.

This sequence belongs to the methyltransferase superfamily. RsmH family.

Its subcellular location is the cytoplasm. It catalyses the reaction cytidine(1402) in 16S rRNA + S-adenosyl-L-methionine = N(4)-methylcytidine(1402) in 16S rRNA + S-adenosyl-L-homocysteine + H(+). Functionally, specifically methylates the N4 position of cytidine in position 1402 (C1402) of 16S rRNA. This chain is Ribosomal RNA small subunit methyltransferase H, found in Lactobacillus gasseri (strain ATCC 33323 / DSM 20243 / BCRC 14619 / CIP 102991 / JCM 1131 / KCTC 3163 / NCIMB 11718 / NCTC 13722 / AM63).